We begin with the raw amino-acid sequence, 1088 residues long: Platelet-derived growth factor receptor alpha (1088 aa).

Positions 1 to 23 are cleaved as a signal peptide; it reads MGTSQAFLVLSCLLTGPSLIVCQ. Ig-like C2-type domains follow at residues 24–112, 116–200, 201–305, 318–409, and 413–516; these read LLLP…SEIE, IYIY…FKTS, EFNV…KTVT, PTFG…FELS, and PASI…LKLV. The Extracellular portion of the chain corresponds to 24–527; it reads LLLPSILPNE…PSLRSELTVA (504 aa). Cys48 and Cys99 are disulfide-bonded. N-linked (GlcNAc...) asparagine glycosylation is found at Asn75, Asn102, and Asn178. Disulfide bonds link Cys149/Cys188 and Cys234/Cys289. 4 N-linked (GlcNAc...) asparagine glycosylation sites follow: Asn352, Asn358, Asn457, and Asn467. A disulfide bridge links Cys434 with Cys500. A helical membrane pass occupies residues 528–548; the sequence is AAVLVLLVIVIVSLIVLVVIW. The Cytoplasmic portion of the chain corresponds to 549 to 1088; sequence KQKPRYEIRW…SSDLVEDSFL (540 aa). Tyr571 and Tyr573 each carry phosphotyrosine; by autocatalysis. The region spanning 592–953 is the Protein kinase domain; it reads LVLGRILGSG…HLSEIVENLL (362 aa). Residues 598–606 and Lys626 each bind ATP; that span reads LGSGAFGKV. 6 positions are modified to phosphotyrosine; by autocatalysis: Tyr719, Tyr730, Tyr741, Tyr753, Tyr761, and Tyr767. Catalysis depends on Asp817, which acts as the Proton acceptor. Tyr848, Tyr987, and Tyr1017 each carry phosphotyrosine; by autocatalysis. The tract at residues 1017-1088 is disordered; that stretch reads YIIPLPDIDP…SSDLVEDSFL (72 aa). The segment covering 1040-1058 has biased composition (polar residues); that stretch reads SSQTSEESAIETGSSSSTF. A compositionally biased stretch (acidic residues) spans 1064–1088; it reads ETIEDIDMMDDIGIDSSDLVEDSFL.

It belongs to the protein kinase superfamily. Tyr protein kinase family. CSF-1/PDGF receptor subfamily. Interacts with homodimeric PDGFA, PDGFB and PDGFC, and with heterodimers formed by PDGFA and PDGFB. Monomer in the absence of bound ligand. Interaction with dimeric PDGFA, PDGFB and/or PDGFC leads to receptor dimerization, where both PDGFRA homodimers and heterodimers with PDGFRB are observed. Interacts (tyrosine phosphorylated) with SHB (via SH2 domain). Interacts (tyrosine phosphorylated) with SHF (via SH2 domain). Interacts (tyrosine phosphorylated) with SRC (via SH2 domain). Interacts (tyrosine phosphorylated) with PIK3R1. Interacts (tyrosine phosphorylated) with PLCG1 (via SH2 domain). Interacts (tyrosine phosphorylated) with CRK, GRB2 and GRB7. Interacts with CD248; this interaction promotes PDGF receptor signaling pathway. In terms of processing, ubiquitinated, leading to its internalization and degradation. Autophosphorylated on tyrosine residues upon ligand binding. Autophosphorylation occurs in trans, i.e. one subunit of the dimeric receptor phosphorylates tyrosine residues on the other subunit. Phosphorylation at Tyr-730 and Tyr-741 is important for interaction with PIK3R1. Phosphorylation at Tyr-719 and Tyr-753 is important for interaction with PTPN11. Phosphorylation at Tyr-761 is important for interaction with CRK. Phosphorylation at Tyr-571 and Tyr-573 is important for interaction with SRC and SRC family members. Phosphorylation at Tyr-987 and Tyr-1017 is important for interaction with PLCG1.

It localises to the cell membrane. It is found in the cell projection. The protein resides in the cilium. The protein localises to the golgi apparatus. The enzyme catalyses L-tyrosyl-[protein] + ATP = O-phospho-L-tyrosyl-[protein] + ADP + H(+). Its activity is regulated as follows. Present in an inactive conformation in the absence of bound ligand. Binding of PDGFA and/or PDGFB leads to dimerization and activation by autophosphorylation on tyrosine residues. Inhibited by imatinib, nilotinib and sorafenib. In terms of biological role, tyrosine-protein kinase that acts as a cell-surface receptor for PDGFA, PDGFB and PDGFC and plays an essential role in the regulation of embryonic development, cell proliferation, survival and chemotaxis. Depending on the context, promotes or inhibits cell proliferation and cell migration. Plays an important role in the differentiation of bone marrow-derived mesenchymal stem cells. Required for normal skeleton development and cephalic closure during embryonic development. Required for normal development of the mucosa lining the gastrointestinal tract, and for recruitment of mesenchymal cells and normal development of intestinal villi. Plays a role in cell migration and chemotaxis in wound healing. Plays a role in platelet activation, secretion of agonists from platelet granules, and in thrombin-induced platelet aggregation. Binding of its cognate ligands - homodimeric PDGFA, homodimeric PDGFB, heterodimers formed by PDGFA and PDGFB or homodimeric PDGFC -leads to the activation of several signaling cascades; the response depends on the nature of the bound ligand and is modulated by the formation of heterodimers between PDGFRA and PDGFRB. Phosphorylates PIK3R1, PLCG1, and PTPN11. Activation of PLCG1 leads to the production of the cellular signaling molecules diacylglycerol and inositol 1,4,5-trisphosphate, mobilization of cytosolic Ca(2+) and the activation of protein kinase C. Phosphorylates PIK3R1, the regulatory subunit of phosphatidylinositol 3-kinase, and thereby mediates activation of the AKT1 signaling pathway. Mediates activation of HRAS and of the MAP kinases MAPK1/ERK2 and/or MAPK3/ERK1. Promotes activation of STAT family members STAT1, STAT3 and STAT5A and/or STAT5B. Receptor signaling is down-regulated by protein phosphatases that dephosphorylate the receptor and its down-stream effectors, and by rapid internalization of the activated receptor. This Rattus norvegicus (Rat) protein is Platelet-derived growth factor receptor alpha (Pdgfra).